The sequence spans 1319 residues: DNA-directed RNA polymerase subunit beta' (1319 aa).

The Zn(2+) site is built by Cys60, Cys62, Cys75, and Cys78. Mg(2+) is bound by residues Asp535, Asp537, and Asp539. Zn(2+) is bound by residues Cys890, Cys971, Cys978, and Cys981.

The protein belongs to the RNA polymerase beta' chain family. As to quaternary structure, the RNAP catalytic core consists of 2 alpha, 1 beta, 1 beta' and 1 omega subunit. When a sigma factor is associated with the core the holoenzyme is formed, which can initiate transcription. Mg(2+) is required as a cofactor. It depends on Zn(2+) as a cofactor.

The catalysed reaction is RNA(n) + a ribonucleoside 5'-triphosphate = RNA(n+1) + diphosphate. DNA-dependent RNA polymerase catalyzes the transcription of DNA into RNA using the four ribonucleoside triphosphates as substrates. This Mycobacteroides abscessus (strain ATCC 19977 / DSM 44196 / CCUG 20993 / CIP 104536 / JCM 13569 / NCTC 13031 / TMC 1543 / L948) (Mycobacterium abscessus) protein is DNA-directed RNA polymerase subunit beta'.